A 274-amino-acid chain; its full sequence is Cytochrome b-c1 complex subunit Rieske, mitochondrial (274 aa).

The tract at residues 29 to 49 (XXXXXXXXTPEPPVLDPKRPI) is disordered. Topologically, residues 79 to 103 (SHTDIKVPDFSDYRRSEVLDKTKSS) are mitochondrial matrix. Residues 104-140 (RESSDARKVFSYMVTATTAVGVTYAAKSIVTQFISSM) traverse the membrane as a helical segment. Over 141–274 (SASADVLAMS…FLSDDMVVVG (134 aa)) the chain is Mitochondrial intermembrane. The region spanning 187–272 (EAAVELSQLR…YEFLSDDMVV (86 aa)) is the Rieske domain. Positions 217, 219, 236, 239, and 241 each coordinate [2Fe-2S] cluster. A disulfide bridge connects residues Cys222 and Cys238.

The protein belongs to the Rieske iron-sulfur protein family. As to quaternary structure, component of the ubiquinol-cytochrome c oxidoreductase (cytochrome b-c1 complex, complex III, CIII), a multisubunit enzyme composed of 11 subunits. The complex is composed of 3 respiratory subunits cytochrome b, cytochrome c1 and Rieske protein UQCRFS1, 2 core protein subunits UQCRC1/QCR1 and UQCRC2/QCR2, and 6 low-molecular weight protein subunits UQCRH/QCR6, UQCRB/QCR7, UQCRQ/QCR8, UQCR10/QCR9, UQCR11/QCR10 and subunit 9, the cleavage product of Rieske protein UQCRFS1. The complex exists as an obligatory dimer and forms supercomplexes (SCs) in the inner mitochondrial membrane with NADH-ubiquinone oxidoreductase (complex I, CI) and cytochrome c oxidase (complex IV, CIV), resulting in different assemblies (supercomplex SCI(1)III(2)IV(1) and megacomplex MCI(2)III(2)IV(2)). Incorporation of the Rieske protein UQCRFS1 is the penultimate step in complex III assembly. Interacts with TTC19, which is involved in the clearance of UQCRFS1 fragments. In terms of assembly, component of the ubiquinol-cytochrome c oxidoreductase (cytochrome b-c1 complex, complex III, CIII). Subunit 9 corresponds to the mitochondrial targeting sequence (MTS) of Rieske protein UQCRFS1. It is retained after processing and incorporated inside complex III, where it remains bound to the complex and localizes between the 2 core subunits UQCRC1/QCR1 and UQCRC2/QCR2. [2Fe-2S] cluster serves as cofactor. In terms of processing, proteolytic processing is necessary for the correct insertion of UQCRFS1 in the complex III dimer. Several fragments are generated during UQCRFS1 insertion, most probably due to the endogenous matrix-processing peptidase (MPP) activity of the 2 core protein subunits UQCRC1/QCR1 and UQCRC2/QCR2, which are homologous to the 2 mitochondrial-processing peptidase (MPP) subunits beta-MPP and alpha-MPP respectively. The action of the protease is also necessary for the clearance of the UQCRFS1 fragments.

It is found in the mitochondrion inner membrane. The enzyme catalyses a quinol + 2 Fe(III)-[cytochrome c](out) = a quinone + 2 Fe(II)-[cytochrome c](out) + 2 H(+)(out). In terms of biological role, component of the ubiquinol-cytochrome c oxidoreductase, a multisubunit transmembrane complex that is part of the mitochondrial electron transport chain which drives oxidative phosphorylation. The respiratory chain contains 3 multisubunit complexes succinate dehydrogenase (complex II, CII), ubiquinol-cytochrome c oxidoreductase (cytochrome b-c1 complex, complex III, CIII) and cytochrome c oxidase (complex IV, CIV), that cooperate to transfer electrons derived from NADH and succinate to molecular oxygen, creating an electrochemical gradient over the inner membrane that drives transmembrane transport and the ATP synthase. The cytochrome b-c1 complex catalyzes electron transfer from ubiquinol to cytochrome c, linking this redox reaction to translocation of protons across the mitochondrial inner membrane, with protons being carried across the membrane as hydrogens on the quinol. In the process called Q cycle, 2 protons are consumed from the matrix, 4 protons are released into the intermembrane space and 2 electrons are passed to cytochrome c. The Rieske protein is a catalytic core subunit containing a [2Fe-2S] iron-sulfur cluster. It cycles between 2 conformational states during catalysis to transfer electrons from the quinol bound in the Q(0) site in cytochrome b to cytochrome c1. Incorporation of UQCRFS1 is the penultimate step in complex III assembly. Component of the ubiquinol-cytochrome c oxidoreductase (cytochrome b-c1 complex, complex III, CIII). UQCRFS1 undergoes proteolytic processing once it is incorporated in the complex III dimer. One of the fragments, called subunit 9, corresponds to its mitochondrial targeting sequence (MTS). The proteolytic processing is necessary for the correct insertion of UQCRFS1 in the complex III dimer, but the persistence of UQCRFS1-derived fragments may prevent newly imported UQCRFS1 to be processed and assembled into complex III and is detrimental for the complex III structure and function. This is Cytochrome b-c1 complex subunit Rieske, mitochondrial (UQCRFS1) from Saimiri sciureus (Common squirrel monkey).